We begin with the raw amino-acid sequence, 143 residues long: Large ribosomal subunit protein uL11 (143 aa).

This sequence belongs to the universal ribosomal protein uL11 family. As to quaternary structure, part of the ribosomal stalk of the 50S ribosomal subunit. Interacts with L10 and the large rRNA to form the base of the stalk. L10 forms an elongated spine to which L12 dimers bind in a sequential fashion forming a multimeric L10(L12)X complex. Post-translationally, one or more lysine residues are methylated.

In terms of biological role, forms part of the ribosomal stalk which helps the ribosome interact with GTP-bound translation factors. The chain is Large ribosomal subunit protein uL11 from Borreliella afzelii (strain PKo) (Borrelia afzelii).